We begin with the raw amino-acid sequence, 395 residues long: 8-amino-7-oxononanoate synthase (395 aa).

R24 serves as a coordination point for substrate. Pyridoxal 5'-phosphate is bound at residue 111–112; that stretch reads GF. H136 lines the substrate pocket. Pyridoxal 5'-phosphate-binding positions include S184, 209–212, and 240–243; these read DDAH and TLSK. Residue K243 is modified to N6-(pyridoxal phosphate)lysine. T357 serves as a coordination point for substrate.

The protein belongs to the class-II pyridoxal-phosphate-dependent aminotransferase family. BioF subfamily. As to quaternary structure, homodimer. Pyridoxal 5'-phosphate serves as cofactor.

It carries out the reaction 6-carboxyhexanoyl-[ACP] + L-alanine + H(+) = (8S)-8-amino-7-oxononanoate + holo-[ACP] + CO2. Its pathway is cofactor biosynthesis; biotin biosynthesis. Its function is as follows. Catalyzes the decarboxylative condensation of pimeloyl-[acyl-carrier protein] and L-alanine to produce 8-amino-7-oxononanoate (AON), [acyl-carrier protein], and carbon dioxide. The polypeptide is 8-amino-7-oxononanoate synthase (Alkaliphilus oremlandii (strain OhILAs) (Clostridium oremlandii (strain OhILAs))).